The sequence spans 196 residues: Phosphoheptose isomerase (196 aa).

An SIS domain is found at 35–194; it reads LTACLRCGGK…EKELFTPSGQ (160 aa). 50–52 contributes to the substrate binding site; it reads NGG. Residues histidine 59 and glutamate 63 each coordinate Zn(2+). Substrate contacts are provided by residues glutamate 63, 92-93, 118-120, serine 123, and glutamine 170; these read ND and STS. The Zn(2+) site is built by glutamine 170 and histidine 178.

Belongs to the SIS family. GmhA subfamily. In terms of assembly, homotetramer. Zn(2+) serves as cofactor.

The protein localises to the cytoplasm. It catalyses the reaction 2 D-sedoheptulose 7-phosphate = D-glycero-alpha-D-manno-heptose 7-phosphate + D-glycero-beta-D-manno-heptose 7-phosphate. It participates in carbohydrate biosynthesis; D-glycero-D-manno-heptose 7-phosphate biosynthesis; D-glycero-alpha-D-manno-heptose 7-phosphate and D-glycero-beta-D-manno-heptose 7-phosphate from sedoheptulose 7-phosphate: step 1/1. Functionally, catalyzes the isomerization of sedoheptulose 7-phosphate in D-glycero-D-manno-heptose 7-phosphate. This chain is Phosphoheptose isomerase, found in Syntrophotalea carbinolica (strain DSM 2380 / NBRC 103641 / GraBd1) (Pelobacter carbinolicus).